The sequence spans 109 residues: Oncomodulin (109 aa).

Serine 2 carries the N-acetylserine modification. 2 consecutive EF-hand domains span residues 39–74 (MSAS…FQSD) and 78–109 (LTES…MVHS). Positions 52, 54, 56, 58, 63, 91, 93, 95, 97, and 102 each coordinate Ca(2+).

It belongs to the parvalbumin family. Found in tumor tissues and not detected in normal tissues.

Functionally, has some calmodulin-like activity with respect to enzyme activation and growth regulation. Binds two calcium ions. This is Oncomodulin (Ocm) from Rattus norvegicus (Rat).